The following is a 464-amino-acid chain: Capsule biosynthesis protein CapB (464 aa).

The chain crosses the membrane as a helical span at residues 65 to 85 (LIQMIFIIGICTVFLIIYGIW).

It is found in the cell membrane. The protein operates within capsule biogenesis; capsule polysaccharide biosynthesis. In terms of biological role, essential for the synthesis of the polyglutamate capsule of B.anthracis which is one of the principal virulence factors during anthrax infection. May form a polyglutamyl synthetase complex together with proteins CapA and CapC. The chain is Capsule biosynthesis protein CapB (capB) from Bacillus anthracis.